Consider the following 76-residue polypeptide: Kappa-actitoxin-Avd4l (76 aa).

The N-terminal stretch at 1 to 19 (MNKALFLCLVVLCAAVVFA) is a signal peptide. The propeptide occupies 20-31 (AEDLQKAKHAPF). Cystine bridges form between C37-C72, C39-C65, and C55-C73.

It belongs to the sea anemone type 3 (BDS) potassium channel toxin family. As to expression, weakly expressed in the ectodermal tissue from the distal and proximal tentacles, body wall, and oral disk.

The protein localises to the secreted. Its subcellular location is the nematocyst. In terms of biological role, blocks Kv3 voltage-gated potassium channels. Reduces blood pressure. The sequence is that of Kappa-actitoxin-Avd4l from Anemonia viridis (Snakelocks anemone).